The following is a 436-amino-acid chain: MNTKLQDSKSPRLKNRILLTISLLTIVRIGSFIPVPYITKEVLVNLLSAENSSNNTFAQLLNTFSGGGNSSFGLLSLGILPYINASIIIQLLTTIIPALSKMQKDEGEYGRRKLVDFTRYLTFFWAIVESISISYSLREVIFEWNLQVYFLISLSLITGSMIVLWFSELITKNGLGNGSSLLICFNIVSNLPDQIKFSLISLKNQINNFSNIFLLISIFLITTIGCIYINEAIIKIPLVSARQLLKKTKSEEKNSSNSILPLRINQAGVMPLVFTSYAILFFSSLFEIIKKQTNIFNIFFQYPILNSVISYWFLKILFWIFYATLIFFFTYFYSTIVLDPKDVAERFRKNSVVILGISPGSSTRSYLSKILRFIAKINAIFLIYNIIGLQILESILNLNIINIRGLGFTSQLILVNVLIDTIKRIRSFLNEEENYF.

8 helical membrane-spanning segments follow: residues 17-37 (ILLTISLLTIVRIGSFIPVPY), 72-92 (FGLLSLGILPYINASIIIQLL), 122-142 (TFFWAIVESISISYSLREVIF), 146-166 (LQVYFLISLSLITGSMIVLWF), 209-229 (FSNIFLLISIFLITTIGCIYI), 269-289 (VMPLVFTSYAILFFSSLFEII), 309-329 (ISYWFLKILFWIFYATLIFFF), and 380-400 (IFLIYNIIGLQILESILNLNI).

Belongs to the SecY/SEC61-alpha family. In terms of assembly, component of the plastid Sec protein translocase complex, which is composed of at least SecY and SecE.

The protein resides in the plastid. It localises to the chloroplast thylakoid membrane. Functionally, the central subunit of the protein translocation channel SecYE. Consists of two halves. These two domains form a lateral gate at the front which open onto the bilayer between TMs 2 and 7, and are clamped together by SecE at the back. The channel is closed by both a pore ring composed of hydrophobic SecY resides and a short helix (helix 2A) on the extracellular side of the membrane which forms a plug. In Vaucheria litorea (Yellow-green alga), this protein is Protein translocase subunit SecY.